Here is an 837-residue protein sequence, read N- to C-terminus: Valine--tRNA ligase (837 aa).

The short motif at P46–H56 is the 'HIGH' region element. The short motif at K514–S518 is the 'KMSKS' region element. K517 contacts ATP. Residues V767–H837 are a coiled coil.

The protein belongs to the class-I aminoacyl-tRNA synthetase family. ValS type 1 subfamily. In terms of assembly, monomer.

It localises to the cytoplasm. It carries out the reaction tRNA(Val) + L-valine + ATP = L-valyl-tRNA(Val) + AMP + diphosphate. In terms of biological role, catalyzes the attachment of valine to tRNA(Val). As ValRS can inadvertently accommodate and process structurally similar amino acids such as threonine, to avoid such errors, it has a 'posttransfer' editing activity that hydrolyzes mischarged Thr-tRNA(Val) in a tRNA-dependent manner. The protein is Valine--tRNA ligase of Mycoplasma genitalium (strain ATCC 33530 / DSM 19775 / NCTC 10195 / G37) (Mycoplasmoides genitalium).